We begin with the raw amino-acid sequence, 466 residues long: Xanthine permease XanQ (466 aa).

At 1–44 (MSDINHAGSDLIFELEDRPPFHQALVGAITHLLAIFVPMVTPAL) the chain is on the cytoplasmic side. Residues 45–65 (IVGAALQLSAETTAYLVSMAM) traverse the membrane as a helical segment. At 66–74 (IASGIGTWL) the chain is on the periplasmic side. Residues 75–95 (QVNRYGIVGSGLLSIQSVNFS) form a helical membrane-spanning segment. The Cytoplasmic portion of the chain corresponds to 96–99 (FVTV). The chain crosses the membrane as a helical span at residues 100–120 (MIALGSSMKSDGFHEELIMSS). Residues 121–139 (LLGVSFVGAFLVVGSSFIL) are Periplasmic-facing. A helical transmembrane segment spans residues 140 to 160 (PYLRRVITPTVSGIVVLMIGL). Topologically, residues 161-170 (SLIKVGIIDF) are cytoplasmic. Residues 171-191 (GGGFAAKSSGTFGNYEHLGVG) form a helical membrane-spanning segment. The Periplasmic segment spans residues 192–199 (LLVLIVVI). The helical transmembrane segment at 200 to 220 (GFNCCRSPLLRMGGIAIGLCV) threads the bilayer. At 221–229 (GYIASLCLG) the chain is on the cytoplasmic side. A helical membrane pass occupies residues 230 to 250 (MVDFSSMRNLPLITIPHPFKY). Residues 251–277 (GFSFSFHQFLVVGTIYLLSVLEAVGDI) are Periplasmic-facing. Residues 278–298 (TATAMVSRRPIQGEEYQSRLK) form a helical membrane-spanning segment. Topologically, residues 299 to 317 (GGVLADGLVSVIASAVGSL) are cytoplasmic. Residues 318 to 338 (PLTTFAQNNGVIQMTGVASRY) form a helical membrane-spanning segment. The Periplasmic segment spans residues 339-361 (VGRTIAVMLVILGLFPMIGGFFT). Residues 362 to 382 (TIPSAVLGGAMTLMFSMIAIA) traverse the membrane as a helical segment. Residue glycine 383 is a topological domain, cytoplasmic. Residues 384-403 (IRIIITNGLKRRETLIVATS) traverse the membrane as a helical segment. The Periplasmic segment spans residues 404–444 (LGLGLGVSYDPEIFKILPASIYVLVENPICAGGLTAILLNI). The helical transmembrane segment at 445 to 465 (ILPGGYRQENVLPGITSAEEM) threads the bilayer. Residue aspartate 466 is a topological domain, cytoplasmic.

It belongs to the nucleobase:cation symporter-2 (NCS2) (TC 2.A.40) family.

Its subcellular location is the cell inner membrane. It catalyses the reaction xanthine(in) + H(+)(in) = xanthine(out) + H(+)(out). Specific, proton motive force-dependent high-affinity transporter for xanthine. The polypeptide is Xanthine permease XanQ (xanQ) (Escherichia coli O157:H7).